A 98-amino-acid chain; its full sequence is NADH-ubiquinone oxidoreductase chain 4L (98 aa).

Transmembrane regions (helical) follow at residues 1 to 21 (MSMVYINIFLAFTMSLMGLLM), 29 to 49 (SLLCLEGMMLSLFIMMAVAIL), and 61 to 81 (IILLVFAACEAALGLSLLVMV).

Belongs to the complex I subunit 4L family. Core subunit of respiratory chain NADH dehydrogenase (Complex I) which is composed of 45 different subunits.

Its subcellular location is the mitochondrion inner membrane. The catalysed reaction is a ubiquinone + NADH + 5 H(+)(in) = a ubiquinol + NAD(+) + 4 H(+)(out). Core subunit of the mitochondrial membrane respiratory chain NADH dehydrogenase (Complex I) which catalyzes electron transfer from NADH through the respiratory chain, using ubiquinone as an electron acceptor. Part of the enzyme membrane arm which is embedded in the lipid bilayer and involved in proton translocation. This Puma concolor (Mountain lion) protein is NADH-ubiquinone oxidoreductase chain 4L (MT-ND4L).